A 77-amino-acid polypeptide reads, in one-letter code: Ribonuclease P protein component 1 (77 aa).

Belongs to the eukaryotic/archaeal RNase P protein component 1 family. As to quaternary structure, consists of a catalytic RNA component and at least 4-5 protein subunits.

It is found in the cytoplasm. It catalyses the reaction Endonucleolytic cleavage of RNA, removing 5'-extranucleotides from tRNA precursor.. In terms of biological role, part of ribonuclease P, a protein complex that generates mature tRNA molecules by cleaving their 5'-ends. The sequence is that of Ribonuclease P protein component 1 from Sulfurisphaera tokodaii (strain DSM 16993 / JCM 10545 / NBRC 100140 / 7) (Sulfolobus tokodaii).